The following is a 389-amino-acid chain: Geodin cluster transcriptional coactivator gedD (389 aa).

The region spanning 13–83 (LAWHVQLLAC…QPGQIMHTPL (71 aa)) is the HTH iclR-type domain. Positions 43–62 (VRDLAQLCGVSETTLSRVVR) form a DNA-binding region, H-T-H motif.

The protein resides in the nucleus. Functionally, transcriptional coactivator; part of the gene cluster that mediates the biosynthesis of geodin, an intermediate in the biosynthesis of other natural products. With gedR, coregulates the production of geodin. The polypeptide is Geodin cluster transcriptional coactivator gedD (gedD) (Aspergillus terreus (strain NIH 2624 / FGSC A1156)).